The sequence spans 20 residues: Brevinin-1SPb (20 aa).

A disulfide bond links Cys-14 and Cys-20.

As to expression, expressed by the skin glands.

It is found in the secreted. Its function is as follows. Antimicrobial peptide with activity against Gram-negative and Gram-positive bacteria (MIC=50 uM against E.coli, MIC=6 uM against S.aureus) and fungi (MIC=13 uM against C.albicans). Shows hemolytic activity on human erythrocytes (HC(50)=25 uM). The protein is Brevinin-1SPb of Lithobates septentrionalis (Mink frog).